Reading from the N-terminus, the 101-residue chain is Feather keratin Cos2-3 (101 aa).

At serine 2 the chain carries N-acetylserine.

This sequence belongs to the avian keratin family. As to quaternary structure, the avian keratins (F-ker, S-ker, C-ker and B-ker) are a complex mixture of very similar polypeptides.

The polypeptide is Feather keratin Cos2-3 (Columba livia (Rock dove)).